A 101-amino-acid chain; its full sequence is Antiviral protein CAP (101 aa).

Functionally, has antiviral activity against tobacco mosaic virus and antitumor activity. The protein is Antiviral protein CAP of Coprinus comatus (Shaggy mane).